The chain runs to 407 residues: NADH dehydrogenase [ubiquinone] 1 alpha subcomplex subunit 10, mitochondrial (407 aa).

Residues 1–60 (MTAVFRVGLVRLVSRATQSPNLLQAQTNALPAAFQQRCSISGKTMRGGPRVPKAAPYPYK) constitute a mitochondrion transit peptide.

This sequence belongs to the complex I NDUFA10 subunit family. In terms of assembly, complex I is composed of 45 different subunits. This a component of the hydrophobic protein fraction. Forms a complex including sicily, ND-42 and Hsp83; the complex is necessary to chaperone ND-42 in the cytoplasm before mitochondrial import; the interaction between sicily and ND-42 is direct and occurs preferably between the unprocessed forms in the cytoplasm. FAD is required as a cofactor. In terms of tissue distribution, expressed in muscles (at protein level).

The protein localises to the mitochondrion matrix. Its subcellular location is the cytoplasm. Accessory subunit of the mitochondrial membrane respiratory chain NADH dehydrogenase (Complex I), that is believed not to be involved in catalysis. Complex I functions in the transfer of electrons from NADH to the respiratory chain. The immediate electron acceptor for the enzyme is believed to be ubiquinone. The sequence is that of NADH dehydrogenase [ubiquinone] 1 alpha subcomplex subunit 10, mitochondrial from Drosophila melanogaster (Fruit fly).